A 1252-amino-acid chain; its full sequence is Calmodulin-regulated spectrin-associated protein 3 (1252 aa).

9 disordered regions span residues 183–205 (KTEQ…SPAQ), 331–385 (HAVS…SMSH), 429–457 (SVSS…ESGD), 479–604 (GAAD…MSEL), 638–697 (FLQV…LGDY), 712–935 (QRDM…EAAR), 962–981 (TTRA…GDFT), 996–1030 (DLDK…DDSA), and 1063–1114 (PNNL…TGPR). Thr184 is modified (phosphothreonine). Ser193 is modified (phosphoserine). Residues 203–312 (PAQPSIRYRK…LVVLLAEMYM (110 aa)) enclose the Calponin-homology (CH) domain. Ser334, Ser347, Ser351, Ser368, Ser373, and Ser382 each carry phosphoserine. A compositionally biased stretch (polar residues) spans 335-353 (PRNTETVPSQNNSGSSSPV). A compositionally biased stretch (low complexity) spans 359-373 (PLLSPGGPQSPLRGS). 3 stretches are compositionally biased toward polar residues: residues 374–383 (TGSLKSSPSM), 441–450 (VSTSSRNSAQ), and 525–534 (ENPSKSSPCS). Residues Ser548, Ser555, and Ser561 each carry the phosphoserine modification. Positions 569-580 (AERKKQLVKAEA) are enriched in basic and acidic residues. Positions 595-629 (EALSSEMSELGARLEEKRRAIEAQKRRIEAIFAKH) form a coiled coil. Ser683 bears the Phosphoserine mark. A coiled-coil region spans residues 696–727 (DYNRAVSKLSAALSSLQRDMQRLTDQQQRLLA). Residues 729–739 (PEAPGPAPPPA) show a composition bias toward pro residues. Positions 740-768 (AWVIPGPATGPKAASPSPARRAPAARRSP) are enriched in low complexity. Ser767 is modified (phosphoserine). A Phosphothreonine modification is found at Thr797. 2 positions are modified to phosphoserine: Ser812 and Ser881. Polar residues predominate over residues 812 to 825 (SPSQVPVQTRSSIL). Residues 887–934 (YKDEDKPEDEMAQKRASLLERQQRRVEEARRRKQWQEAEKEQKREEAA) show a composition bias toward basic and acidic residues. Residues 896-943 (EMAQKRASLLERQQRRVEEARRRKQWQEAEKEQKREEAARLAQEAPGL) adopt a coiled-coil conformation. Ser1077 is modified (phosphoserine). The CKK domain maps to 1112-1246 (GPRLYKEPSA…QSKKPTTPKK (135 aa)).

The protein belongs to the CAMSAP1 family. Interacts with PLEKHA7. Interacts with CAMSAP2. Interacts with KATNA1 and KATNB1; leading to regulate the length of CAMSAP3-decorated microtubule stretches. Interacts with AKAP9; regulating Golgi assembly in epithelial cells. Interacts with MACF1. Interacts with isoform C of CDH23; leading to inhibit CAMSAP3 ability to induce microtubule bundle formation. Interacts with AKNA. In terms of tissue distribution, expressed at the apical surface of respiratory epithelia, as well as in the acini of submucosal glands (at protein level). In cochlea, restricted to the organ of Corti and increases during development (at protein level). Highly expressed in both sensory hair cells and supporting cells.

The protein resides in the cytoplasm. Its subcellular location is the cytoskeleton. It is found in the cell junction. The protein localises to the adherens junction. It localises to the cilium axoneme. The protein resides in the cilium basal body. Key microtubule-organizing protein that specifically binds the minus-end of non-centrosomal microtubules and regulates their dynamics and organization. Specifically recognizes growing microtubule minus-ends and autonomously decorates and stabilizes microtubule lattice formed by microtubule minus-end polymerization. Acts on free microtubule minus-ends that are not capped by microtubule-nucleating proteins or other factors and protects microtubule minus-ends from depolymerization. In addition, it also reduces the velocity of microtubule polymerization. Required for the biogenesis and the maintenance of zonula adherens by anchoring the minus-end of microtubules to zonula adherens and by recruiting the kinesin KIFC3 to those junctional sites. Required for orienting the apical-to-basal polarity of microtubules in epithelial cells: acts by tethering non-centrosomal microtubules to the apical cortex, leading to their longitudinal orientation. Plays a key role in early embryos, which lack centrosomes: accumulates at the microtubule bridges that connect pairs of cells and enables the formation of a non-centrosomal microtubule-organizing center that directs intracellular transport in the early embryo. Couples non-centrosomal microtubules with actin: interaction with MACF1 at the minus ends of non-centrosomal microtubules, tethers the microtubules to actin filaments, regulating focal adhesion size and cell migration. Plays a key role in the generation of non-centrosomal microtubules by accumulating in the pericentrosomal region and cooperating with KATNA1 to release non-centrosomal microtubules from the centrosome. Through the microtubule cytoskeleton, also regulates the organization of cellular organelles including the Golgi and the early endosomes. Through interaction with AKAP9, involved in translocation of Golgi vesicles in epithelial cells, where microtubules are mainly non-centrosomal. Plays an important role in motile cilia function by facilitatating proper orientation of basal bodies and formation of central microtubule pairs in motile cilia. The chain is Calmodulin-regulated spectrin-associated protein 3 from Mus musculus (Mouse).